We begin with the raw amino-acid sequence, 118 residues long: UPF0342 protein LCK_01004 (118 aa).

Belongs to the UPF0342 family.

In Leuconostoc citreum (strain KM20), this protein is UPF0342 protein LCK_01004.